The sequence spans 814 residues: Phosphatidylinositol 3-kinase VPS34 (814 aa).

In terms of domain architecture, C2 PI3K-type spans 25-177 (LDGNLPVKKS…EKLMNKYERG (153 aa)). The 176-residue stretch at 274 to 449 (DRDLKPSNIE…YSTYELLEEN (176 aa)) folds into the PIK helical domain. A PI3K/PI4K catalytic domain is found at 532–799 (VAGESSLFKS…LINESVSALF (268 aa)). Residues 538–544 (LFKSALH) are G-loop. The interval 668–676 (GIGDRHLDN) is catalytic loop. The activation loop stretch occupies residues 687–708 (HVDFAFILGRDPKPFPPPMKLC).

It belongs to the PI3/PI4-kinase family. Interacts with VPS15. Component of a complex made of VPS38/USL1 and PI3K main subunits such as VPS15, ATG6/VPS30 and VPS34. Binds directly to VPS38/USL1.

It catalyses the reaction a 1,2-diacyl-sn-glycero-3-phospho-(1D-myo-inositol) + ATP = a 1,2-diacyl-sn-glycero-3-phospho-(1D-myo-inositol-3-phosphate) + ADP + H(+). With respect to regulation, the PI3K inhibitor LY294002 affects phosphatidylinositol 3-phosphate (PI3P) levels and triggers a decrease in proline, hydrophobic and aromatic amino acids, and sugars (e.g. raffinose) accumulation in response to salt treatment correlated with lower P5CS1 expression and higher ProDH1 expression, genes involved in proline biosynthesis and catabolism, respectively. Functionally, involved in the negative regulation of proline, hydrophobic and aromatic amino acids accumulation, especially in response to salt (NaCl), either through inhibition of their synthesis and/or promotion of their catabolism. Triggers defense responses (e.g. pathogenesis related (PR1 and PR5) gene expression and hydrogen peroxide H(2)O(2) burst) to the bacterial pathogen compatible Pseudomonas syringae pv tomato DC3000 (Pst DC3000) and incompatible Pst DC3000 (avrRpt2), by regulating reactive ogygen species (ROS) production and by promoting stomatal closure. This chain is Phosphatidylinositol 3-kinase VPS34, found in Arabidopsis thaliana (Mouse-ear cress).